Consider the following 149-residue polypeptide: MKIEIIETKIGLVKIIYDDTQTKIISVMFIDSSKIKPVKNSLSGLHKYFKGQNDYFTNLDLELKGTPFQRKVWKQILEIPFGETRTYSDIAMAIGNPKAVRAVANACGANPIAIIVPCHRVVGKNNDGGYEYGLEKKLWLLDFEKKNTQ.

Catalysis depends on Cys118, which acts as the Alkyl group acceptor.

The protein belongs to the MGMT family.

The catalysed reaction is a 6-O-methyl-2'-deoxyguanosine in DNA + L-cysteinyl-[protein] = S-methyl-L-cysteinyl-[protein] + a 2'-deoxyguanosine in DNA. It carries out the reaction a 4-O-methyl-thymidine in DNA + L-cysteinyl-[protein] = a thymidine in DNA + S-methyl-L-cysteinyl-[protein]. This Acanthamoeba polyphaga (Amoeba) protein is Probable methylated-DNA--protein-cysteine methyltransferase (MGMT).